Here is a 325-residue protein sequence, read N- to C-terminus: 2-oxoglutarate-dependent dioxygenase tropC (325 aa).

The 103-residue stretch at 185–287 (PSIPMRLLHY…RYSVAFFLNG (103 aa)) folds into the Fe2OG dioxygenase domain. 3 residues coordinate Fe cation: histidine 210, aspartate 212, and histidine 269. Residue arginine 278 coordinates 2-oxoglutarate.

Belongs to the iron/ascorbate-dependent oxidoreductase family. Requires Fe(2+) as cofactor.

The protein operates within secondary metabolite biosynthesis. 2-oxoglutarate-dependent dioxygenase; part of the gene cluster that mediates the biosynthesis of the tropolone class of fungal maleic anhydrides. The pathway begins with the synthesis of 3-methylorcinaldehyde by the non-reducing polyketide synthase (PKS) tropA. 3-methylorcinaldehyde is the substrate for the FAD-dependent monooxygenase tropB to yield a dearomatized hydroxycyclohexadione. The 2-oxoglutarate-dependent dioxygenase tropC then performs the oxidative ring expansion to provide the first tropolone metabolite stipitaldehyde. Trop D converts stipitaldehyde into stipitacetal which is in turn converted to stipitalide by the short-chain dehydrogenase/reductase tropE. The next steps involve tropF, tropG, tropH, tropI and tropJ to form successive tropolone maleic anhydrides including stipitaldehydic, stipitatonic and stipitatic acids. This chain is 2-oxoglutarate-dependent dioxygenase tropC, found in Talaromyces stipitatus (strain ATCC 10500 / CBS 375.48 / QM 6759 / NRRL 1006) (Penicillium stipitatum).